Here is a 381-residue protein sequence, read N- to C-terminus: Probable cyclic AMP-AMP-GMP nucleotide synthase (381 aa).

Residues S53 and R56 each contribute to the GTP site. Residues D69 and D71 contribute to the active site. Mg(2+)-binding residues include D69 and D71. R109 contacts GTP. The active site involves D121. Mg(2+)-binding residues include D121 and D196. The GTP site is built by R197, R204, T205, Q210, and R307. The tract at residues 348–381 is disordered; it reads GTKFPFPGPQGGDRSGGFTAPTQPAEPQKTGRFA.

It belongs to the CD-NTase family. D02 subfamily. Requires Mg(2+) as cofactor.

The enzyme catalyses GTP + 2 ATP = 3',3',3'-cAAG + 3 diphosphate. Functionally, cyclic nucleotide synthase (second messenger synthase) of a CBASS antivirus system. CBASS (cyclic oligonucleotide-based antiphage signaling system) provides immunity against bacteriophage. The CD-NTase protein synthesizes cyclic nucleotides in response to infection; these serve as specific second messenger signals. The signals activate a diverse range of effectors, leading to bacterial cell death and thus abortive phage infection. In terms of biological role, cyclic nucleotide synthase, synthesizes a tricyclic nucleotide with AMP and GMP moieties, probably 3',3',3'-cyclic AMP-AMP-GMP (3'3'3'-cAAG). Controls the activity of the associated CBASS effector protein. The sequence is that of Probable cyclic AMP-AMP-GMP nucleotide synthase from Salmonella paratyphi B (Salmonella enterica subsp. enterica serovar Paratyphi B).